A 40-amino-acid chain; its full sequence is Protamine-1 (40 aa).

The interval 1-40 (MPPRRKRVSSAPRRRRRTYRRTTAHKHQDRPVHRRRRRRH) is disordered.

As to expression, testis.

Its subcellular location is the nucleus. The protein localises to the chromosome. In terms of biological role, protamines substitute for histones in the chromatin of sperm during the haploid phase of spermatogenesis. They compact sperm DNA into a highly condensed, stable and inactive complex. The sequence is that of Protamine-1 (PBP1) from Bufo japonicus (Japanese common toad).